The sequence spans 240 residues: Homeobox protein DLX-4 (240 aa).

Disordered stretches follow at residues 44-70 (DLSY…DSYL) and 175-194 (LKQS…PSLS). Residues 116 to 175 (LRKPRTIYSSLQLQHLNQRFQHTQYLALPERAQLAAQLGLTQTQVKIWFQNKRSKYKKLL) constitute a DNA-binding region (homeobox).

This sequence belongs to the distal-less homeobox family. Branchial arches, molar and incisor teeth and limbs.

It localises to the nucleus. May play a role in determining the production of hemoglobin S. May act as a repressor. During embryonic development, plays a role in palatogenesis. This is Homeobox protein DLX-4 (Dlx4) from Mus musculus (Mouse).